The sequence spans 43 residues: Defensin-B (43 aa).

3 disulfide bridges follow: cysteine 3–cysteine 34, cysteine 20–cysteine 39, and cysteine 24–cysteine 41.

The protein resides in the secreted. In terms of biological role, antibacterial protein. Strong activity against the Gram-positive bacteria M.luteus, B.megaterium and S.aureus. Reduced activity against Gram-positive bacterium B.subtilis and weak activity against Gram-negative bacterium X.japonicus. No detectable activity against the Gram-negative bacteria E.asbriae, E.coli, P.aeruginosa and S.marcescens. This Anomala cuprea (Cupreous chafer beetle) protein is Defensin-B.